We begin with the raw amino-acid sequence, 153 residues long: Glucose-6-phosphate 1-dehydrogenase (153 aa).

NADP(+) contacts are provided by Arg-21 and Lys-120. Lys-120 is a binding site for D-glucose 6-phosphate.

This sequence belongs to the glucose-6-phosphate dehydrogenase family.

It is found in the cytoplasm. It localises to the cytosol. The enzyme catalyses D-glucose 6-phosphate + NADP(+) = 6-phospho-D-glucono-1,5-lactone + NADPH + H(+). It functions in the pathway carbohydrate degradation; pentose phosphate pathway; D-ribulose 5-phosphate from D-glucose 6-phosphate (oxidative stage): step 1/3. In terms of biological role, cytosolic glucose-6-phosphate dehydrogenase that catalyzes the first and rate-limiting step of the oxidative branch within the pentose phosphate pathway/shunt, an alternative route to glycolysis for the dissimilation of carbohydrates and a major source of reducing power and metabolic intermediates for fatty acid and nucleic acid biosynthetic processes. This Culex pipiens (House mosquito) protein is Glucose-6-phosphate 1-dehydrogenase (ZW).